A 628-amino-acid polypeptide reads, in one-letter code: Protein ETHYLENE INSENSITIVE 3 (628 aa).

Residues 38-68 (EDDYTDDEIDVDELERRMWRDKMRLKRLKEQ) are a coiled coil. The segment covering 66–79 (KEQDKGKEGVDAAK) has biased composition (basic and acidic residues). Positions 66–92 (KEQDKGKEGVDAAKQRQSQEQARRKKM) are disordered. The DNA-binding domain stretch occupies residues 174-306 (TPHTLQELQD…SLARELYPES (133 aa)).

The protein belongs to the EIN3 family. As to quaternary structure, acts as a homodimer to bind the primary ethylene response element. Interacts with TAF12B. Interacts with KIN10. Binds to ENAP1 in the presence of ethylene; this reaction facilitates its association with histone. Phosphorylated by KIN10.

It is found in the nucleus. With respect to regulation, activated by phosphorylation by MPK3 and MPK6. Down-regulated by KIN10 that controls its protein stability under a phosphorylation-dependent manner. Satnilitzed during hypoxia (e.g. submergences) via a ceramides-triggered and CTR1-dependent manner. Functionally, transcription factor acting as a positive regulator in the ethylene response pathway, by promoting histone acetylation in an ENAP1-dependent manner, thus accelerating the expression of ethylene-responsive genes. Binds DNA. Is required for ethylene responsiveness in adult plant tissues. Binds a primary ethylene response element present in the ETHYLENE-RESPONSE-FACTOR1 promoter with consequence to activate the transcription of this gene. The chain is Protein ETHYLENE INSENSITIVE 3 from Arabidopsis thaliana (Mouse-ear cress).